We begin with the raw amino-acid sequence, 451 residues long: mRNA cleavage and polyadenylation factor CLP1 (451 aa).

ATP is bound by residues Lys-75 and 136-141; that span reads NTGKTA.

Belongs to the Clp1 family. Clp1 subfamily. In terms of assembly, component of a pre-mRNA cleavage factor complex. Interacts directly with PCF11.

The protein localises to the nucleus. Its function is as follows. Required for endonucleolytic cleavage during polyadenylation-dependent pre-mRNA 3'-end formation. The sequence is that of mRNA cleavage and polyadenylation factor CLP1 from Candida glabrata (strain ATCC 2001 / BCRC 20586 / JCM 3761 / NBRC 0622 / NRRL Y-65 / CBS 138) (Yeast).